The sequence spans 155 residues: Histone H3-like centromeric protein hH3v (155 aa).

The segment covering 1–24 (MPPKKGGVTKSKAVSKKAAAVPTP) has biased composition (low complexity). Positions 1–56 (MPPKKGGVTKSKAVSKKAAAVPTPKATPPGRRKSRASSVQPGDPVPQGKKRRYRPG) are disordered. The segment at 45-148 (VPQGKKRRYR…IQLARRIRGV (104 aa)) is H3-like.

The protein belongs to the histone H3 family. Component of centromeric nucleosomes, where DNA is wrapped around a histone octamer core. The octamer contains two molecules each of H2A, H2B, hH3v/CENPA and H4 assembled in one hH3v-H4 heterotetramer and two H2A-H2B heterodimers. Interacts with the inner kinetochore. Ubiquitinated. Is degraded through ubiquitin-mediated proteolysis when not protected by its association to the kinetochore.

It is found in the nucleus. The protein localises to the chromosome. Its subcellular location is the centromere. In terms of biological role, histone H3-like nucleosomal protein that is specifically found in centromeric nucleosomes. Replaces conventional H3 in the nucleosome core of centromeric chromatin that serves as an assembly site for the inner kinetochore. Required for recruitment and assembly of kinetochore proteins, mitotic progression and chromosome segregation. May serve as an epigenetic mark that propagates centromere identity through replication and cell division. The chain is Histone H3-like centromeric protein hH3v (hH3v) from Neurospora crassa (strain ATCC 24698 / 74-OR23-1A / CBS 708.71 / DSM 1257 / FGSC 987).